Consider the following 196-residue polypeptide: GTP cyclohydrolase 1 (196 aa).

Residues Cys-86, His-89, and Cys-158 each coordinate Zn(2+).

The protein belongs to the GTP cyclohydrolase I family. As to quaternary structure, toroid-shaped homodecamer, composed of two pentamers of five dimers.

It carries out the reaction GTP + H2O = 7,8-dihydroneopterin 3'-triphosphate + formate + H(+). It participates in cofactor biosynthesis; 7,8-dihydroneopterin triphosphate biosynthesis; 7,8-dihydroneopterin triphosphate from GTP: step 1/1. In Clostridium botulinum (strain Langeland / NCTC 10281 / Type F), this protein is GTP cyclohydrolase 1.